Reading from the N-terminus, the 185-residue chain is Ribosome-recycling factor (185 aa).

This sequence belongs to the RRF family.

It localises to the cytoplasm. Functionally, responsible for the release of ribosomes from messenger RNA at the termination of protein biosynthesis. May increase the efficiency of translation by recycling ribosomes from one round of translation to another. In Nocardioides sp. (strain ATCC BAA-499 / JS614), this protein is Ribosome-recycling factor.